We begin with the raw amino-acid sequence, 505 residues long: Cytochrome P450 76A2 (505 aa).

Cysteine 448 is a binding site for heme.

Belongs to the cytochrome P450 family. Requires heme as cofactor.

This is Cytochrome P450 76A2 (CYP76A2) from Solanum melongena (Eggplant).